Here is a 234-residue protein sequence, read N- to C-terminus: Octanoyltransferase (234 aa).

Residues 50 to 234 (GEAPELVWLL…AFEQVFGPTR (185 aa)) enclose the BPL/LPL catalytic domain. Substrate is bound by residues 88 to 95 (RGGQITYH), 163 to 165 (AIG), and 176 to 178 (GIA). Cysteine 194 serves as the catalytic Acyl-thioester intermediate.

It belongs to the LipB family.

Its subcellular location is the cytoplasm. The catalysed reaction is octanoyl-[ACP] + L-lysyl-[protein] = N(6)-octanoyl-L-lysyl-[protein] + holo-[ACP] + H(+). It functions in the pathway protein modification; protein lipoylation via endogenous pathway; protein N(6)-(lipoyl)lysine from octanoyl-[acyl-carrier-protein]: step 1/2. In terms of biological role, catalyzes the transfer of endogenously produced octanoic acid from octanoyl-acyl-carrier-protein onto the lipoyl domains of lipoate-dependent enzymes. Lipoyl-ACP can also act as a substrate although octanoyl-ACP is likely to be the physiological substrate. The sequence is that of Octanoyltransferase from Rhodopseudomonas palustris (strain BisA53).